The chain runs to 426 residues: Putative glutamate--cysteine ligase 2 (426 aa).

The protein belongs to the glutamate--cysteine ligase type 2 family. YbdK subfamily.

The enzyme catalyses L-cysteine + L-glutamate + ATP = gamma-L-glutamyl-L-cysteine + ADP + phosphate + H(+). Functionally, ATP-dependent carboxylate-amine ligase which exhibits weak glutamate--cysteine ligase activity. The polypeptide is Putative glutamate--cysteine ligase 2 (Bradyrhizobium diazoefficiens (strain JCM 10833 / BCRC 13528 / IAM 13628 / NBRC 14792 / USDA 110)).